The chain runs to 387 residues: Phosphoglycerate kinase (387 aa).

Residues 21-23 (DLN), arginine 36, 60-63 (HLGR), arginine 114, and arginine 147 each bind substrate. ATP contacts are provided by residues lysine 198, glutamate 313, and 339–342 (GGDT).

This sequence belongs to the phosphoglycerate kinase family. In terms of assembly, monomer.

The protein resides in the cytoplasm. The enzyme catalyses (2R)-3-phosphoglycerate + ATP = (2R)-3-phospho-glyceroyl phosphate + ADP. The protein operates within carbohydrate degradation; glycolysis; pyruvate from D-glyceraldehyde 3-phosphate: step 2/5. In Baumannia cicadellinicola subsp. Homalodisca coagulata, this protein is Phosphoglycerate kinase.